The following is a 199-amino-acid chain: Superoxide dismutase [Fe] (199 aa).

Fe cation contacts are provided by H27, H74, D158, and H162.

This sequence belongs to the iron/manganese superoxide dismutase family. In terms of assembly, homodimer. The cofactor is Fe cation.

It carries out the reaction 2 superoxide + 2 H(+) = H2O2 + O2. Its function is as follows. Destroys superoxide anion radicals which are normally produced within the cells and which are toxic to biological systems. This Babesia bovis protein is Superoxide dismutase [Fe] (SODB).